The following is a 189-amino-acid chain: uncharacterized protein (189 aa).

The segment covering 105 to 115 (EKLEKEEESKT) has biased composition (basic and acidic residues). Residues 105–189 (EKLEKEEESK…TDDEKTEVST (85 aa)) form a disordered region. Over residues 116-136 (AKKRAKRLRQKAAAKKRKLTK) the composition is skewed to basic residues. Acidic residues predominate over residues 141–151 (SDESSSDDSDS). Over residues 161–177 (SEGKQNTEVEDKDKVEK) the composition is skewed to basic and acidic residues. The span at 178-189 (EETDDEKTEVST) shows a compositional bias: acidic residues.

This is an uncharacterized protein from Caenorhabditis elegans.